Here is a 286-residue protein sequence, read N- to C-terminus: Prohibitin-6, mitochondrial (286 aa).

At 1 to 12 (MNFKNVKVPKGP) the chain is on the mitochondrial matrix side. A helical; Signal-anchor for type II membrane protein membrane pass occupies residues 13-35 (GGGVIAAVVIGGLSLYGATHTLY). Residues 36–286 (NVDGGHRAIV…AMDLDVKPKK (251 aa)) are Mitochondrial intermembrane-facing.

This sequence belongs to the prohibitin family. Component of a prohibitin multimeric complex in mitochondrial membranes. Mostly expressed in proliferative tissues, including vasculature, shoot and root apical tissues.

Its subcellular location is the mitochondrion inner membrane. In terms of biological role, prohibitin probably acts as a holdase/unfoldase for the stabilization of newly synthesized mitochondrial proteins. This Arabidopsis thaliana (Mouse-ear cress) protein is Prohibitin-6, mitochondrial (PHB6).